Reading from the N-terminus, the 210-residue chain is MLELFDVSYEELQTTRSEELYKLRKKTFSDRLGWEVICSQGMESDEFDGPGTRYILGICEGQLVCSVRFTSLDRPNMITHTFQHCFSDVTLPAYGTESSRFFVDKARARALLGEHYPISQVLFLAMVNWAQNNAYGNIYTIVSRAMLKILTRSGWQIKVIKEAFLTEKERIYLLTLPAGQDDKQQLGGDVVSRTGCPPVAVTTWPLTLPV.

The protein belongs to the autoinducer synthase family.

The catalysed reaction is a fatty acyl-[ACP] + S-adenosyl-L-methionine = an N-acyl-L-homoserine lactone + S-methyl-5'-thioadenosine + holo-[ACP] + H(+). Required for the synthesis of OHHL (N-(3-oxohexanoyl)-L-homoserine lactone), an autoinducer molecule which binds to EsaR. OHHL is necessary for biosynthesis of EPS virulence factor (extracellular heteropolysaccharide) which plays a role in the development of Stewart's wilt on sweet corn. The polypeptide is Acyl-homoserine-lactone synthase (esaI) (Pantoea stewartii subsp. stewartii (Erwinia stewartii)).